A 273-amino-acid polypeptide reads, in one-letter code: Dermonecrotic toxin LdSicTox-alphaIB1bii (273 aa).

Residue H5 is part of the active site. Residues E25 and D27 each contribute to the Mg(2+) site. H41 (nucleophile) is an active-site residue. 2 cysteine pairs are disulfide-bonded: C45/C51 and C47/C190. D85 contacts Mg(2+). N-linked (GlcNAc...) asparagine glycosylation occurs at N250.

This sequence belongs to the arthropod phospholipase D family. Class II subfamily. Mg(2+) serves as cofactor. In terms of tissue distribution, expressed by the venom gland.

Its subcellular location is the secreted. It carries out the reaction an N-(acyl)-sphingosylphosphocholine = an N-(acyl)-sphingosyl-1,3-cyclic phosphate + choline. The catalysed reaction is an N-(acyl)-sphingosylphosphoethanolamine = an N-(acyl)-sphingosyl-1,3-cyclic phosphate + ethanolamine. The enzyme catalyses a 1-acyl-sn-glycero-3-phosphocholine = a 1-acyl-sn-glycero-2,3-cyclic phosphate + choline. It catalyses the reaction a 1-acyl-sn-glycero-3-phosphoethanolamine = a 1-acyl-sn-glycero-2,3-cyclic phosphate + ethanolamine. In terms of biological role, dermonecrotic toxins cleave the phosphodiester linkage between the phosphate and headgroup of certain phospholipids (sphingolipid and lysolipid substrates), forming an alcohol (often choline) and a cyclic phosphate. This toxin acts on sphingomyelin (SM). It may also act on ceramide phosphoethanolamine (CPE), lysophosphatidylcholine (LPC) and lysophosphatidylethanolamine (LPE), but not on lysophosphatidylserine (LPS), and lysophosphatidylglycerol (LPG). It acts by transphosphatidylation, releasing exclusively cyclic phosphate products as second products. Induces dermonecrosis, hemolysis, increased vascular permeability, edema, inflammatory response, and platelet aggregation. The sequence is that of Dermonecrotic toxin LdSicTox-alphaIB1bii from Loxosceles deserta (Desert recluse spider).